Reading from the N-terminus, the 341-residue chain is Protein quaking-A (341 aa).

A KH domain is found at 87–153 (FVPVKEYPDY…WEHLNEDLHV (67 aa)). The SH3-binding signature appears at 276–279 (PPTP). Positions 324 to 330 (RVHPYQR) match the Nuclear localization signal motif.

This sequence belongs to the quaking family. Homodimer; does not require RNA to homodimerize.

It is found in the cytoplasm. It localises to the nucleus. Its function is as follows. RNA reader protein, which recognizes and binds specific RNAs, thereby regulating RNA metabolic processes, such as pre-mRNA splicing, circular RNA (circRNA) formation, mRNA export, mRNA stability and/or translation. Involved in various cellular processes, such as mRNA storage into stress granules, apoptosis, interferon response, glial cell fate and development. Binds to the 5'-NACUAAY-N(1,20)-UAAY-3' RNA core sequence. Acts as a mRNA modification reader that specifically recognizes and binds mRNA transcripts modified by internal N(7)-methylguanine (m7G). Promotes the formation of circular RNAs (circRNAs): acts by binding to sites flanking circRNA-forming exons. CircRNAs are produced by back-splicing circularization of pre-mRNAs. Required to protect and promote stability of mRNAs which promotes oligodendrocyte differentiation. Acts as an important regulator of muscle development: required during early skeletal myofibril formation by regulating the accumulation of the muscle-specific tropomyosin-3 (tpm3) transcripts. This is Protein quaking-A from Danio rerio (Zebrafish).